A 561-amino-acid polypeptide reads, in one-letter code: DNA ligase B (561 aa).

The active-site N6-AMP-lysine intermediate is Lys124.

Belongs to the NAD-dependent DNA ligase family. LigB subfamily.

The catalysed reaction is NAD(+) + (deoxyribonucleotide)n-3'-hydroxyl + 5'-phospho-(deoxyribonucleotide)m = (deoxyribonucleotide)n+m + AMP + beta-nicotinamide D-nucleotide.. Functionally, catalyzes the formation of phosphodiester linkages between 5'-phosphoryl and 3'-hydroxyl groups in double-stranded DNA using NAD as a coenzyme and as the energy source for the reaction. The protein is DNA ligase B of Cronobacter sakazakii (strain ATCC BAA-894) (Enterobacter sakazakii).